The sequence spans 433 residues: MSDKLSYKVADISLADWGRKAIEIAENEMPGLMKMREMYSESKPLKGARIAGCLHMTLQTAVLIETLTAIGAEVQWSSCNIFSTQDHAAAAIAKTGVPVYAWKGETDEEYIWCIEQTIYFKDGKPLNMILDDGGDLTNLVHTKYPQLLKGIKGISEETTTGVHNLYKMKSSGTLQVPAINVNDSVTKSKFDNLYGCRESLIDGIKRATDVMIAGKVAVVAGYGDVGKGCAQALRAFGARVLITEIDPINALQAAMEGYEVTTMDEASKEGNIFVTTTGCADIVEGRHFENMKDDSIVCNIGHFDVELDVKWLNDNAAKKINIKPQVDRYLLKNGRHIILLAEGRLVNLGCAMGHPSFVMSNSFTNQVMAQIELWTNTDKYPVGVYFLPKKLDEAVAAAHLDKLGVKLTKLTDKQAKYLGLDKEGPFKPDHYRY.

Substrate-binding residues include threonine 57, aspartate 132, glutamate 157, lysine 187, and aspartate 191. The tract at residues 184 to 351 (SVTKSKFDNL…EGRLVNLGCA (168 aa)) is NAD binding.

This sequence belongs to the adenosylhomocysteinase family. As to quaternary structure, homotetramer. Requires NAD(+) as cofactor.

It localises to the cytoplasm. The enzyme catalyses S-adenosyl-L-homocysteine + H2O = L-homocysteine + adenosine. It participates in amino-acid biosynthesis; L-homocysteine biosynthesis; L-homocysteine from S-adenosyl-L-homocysteine: step 1/1. Its function is as follows. Catalyzes the hydrolysis of S-adenosyl-L-homocysteine to form adenosine and homocysteine. Binds copper ions. The polypeptide is Adenosylhomocysteinase B (ahcy-b) (Xenopus laevis (African clawed frog)).